The primary structure comprises 911 residues: Probable 2-oxoadipate dehydrogenase complex component E1 homolog (911 aa).

Belongs to the alpha-ketoglutarate dehydrogenase family. Thiamine diphosphate serves as cofactor.

Its subcellular location is the mitochondrion. It catalyses the reaction N(6)-[(R)-lipoyl]-L-lysyl-[protein] + 2-oxoadipate + H(+) = N(6)-[(R)-S(8)-glutaryldihydrolipoyl]-L-lysyl-[protein] + CO2. In terms of biological role, 2-oxoadipate dehydrogenase (E1a) component of the 2-oxoadipate dehydrogenase complex (OADHC). Participates in the first step, rate limiting for the overall conversion of 2-oxoadipate (alpha-ketoadipate) to glutaryl-CoA and CO(2) catalyzed by the whole OADHC. Catalyzes the irreversible decarboxylation of 2-oxoadipate via the thiamine diphosphate (ThDP) cofactor and subsequent transfer of the decarboxylated acyl intermediate on an oxidized dihydrolipoyl group that is covalently amidated to the E2 enzyme (dihydrolipoyllysine-residue succinyltransferase or DLST). The protein is Probable 2-oxoadipate dehydrogenase complex component E1 homolog of Caenorhabditis elegans.